The chain runs to 135 residues: Fatty acid-binding protein 5 (135 aa).

Ala-2 is modified (N-acetylalanine). Lys-17 bears the N6-acetyllysine mark. Tyr-22 is subject to Phosphotyrosine; by Tyr-kinases. Positions 24-34 (KEVGVGMALRK) match the Nuclear localization signal motif. N-eicosanoyl ethanolamine contacts are provided by Cys-43 and Arg-109. Cysteines 120 and 127 form a disulfide. 129–131 (RVY) serves as a coordination point for (9Z,12Z)-octadecadienoate. Tyr-131 contacts N-eicosanoyl ethanolamine. Tyr-131 contributes to the hexadecanoate binding site. Residue Tyr-131 is modified to Phosphotyrosine.

This sequence belongs to the calycin superfamily. Fatty-acid binding protein (FABP) family. Monomer. As to expression, most abundant in lens and retina (found in the mueller cells), moderately abundant in heart and testis (found in the Sertoli cells), and present in very low amounts in lung.

It localises to the cytoplasm. Its subcellular location is the nucleus. The protein localises to the synapse. The protein resides in the postsynaptic density. It is found in the secreted. The catalysed reaction is hexadecanoate(out) = hexadecanoate(in). It catalyses the reaction (9Z,12Z)-octadecadienoate(out) = (9Z,12Z)-octadecadienoate(in). It carries out the reaction (9Z)-octadecenoate(out) = (9Z)-octadecenoate(in). In terms of biological role, intracellular carrier for long-chain fatty acids and related active lipids, such as endocannabinoids, that regulate the metabolism and actions of the ligands they bind. In addition to the cytosolic transport, selectively delivers specific fatty acids from the cytosol to the nucleus, wherein they activate nuclear receptors. Delivers retinoic acid to the nuclear receptor peroxisome proliferator-activated receptor delta; which promotes proliferation and survival. May also serve as a synaptic carrier of endocannabinoid at central synapses and thus controls retrograde endocannabinoid signaling. Modulates inflammation by regulating PTGES induction via NF-kappa-B activation, and prostaglandin E2 (PGE2) biosynthesis during inflammation. This Bos taurus (Bovine) protein is Fatty acid-binding protein 5 (FABP5).